A 258-amino-acid chain; its full sequence is Phosphoribosylaminoimidazole-succinocarboxamide synthase (258 aa).

The protein belongs to the SAICAR synthetase family.

The enzyme catalyses 5-amino-1-(5-phospho-D-ribosyl)imidazole-4-carboxylate + L-aspartate + ATP = (2S)-2-[5-amino-1-(5-phospho-beta-D-ribosyl)imidazole-4-carboxamido]succinate + ADP + phosphate + 2 H(+). Its pathway is purine metabolism; IMP biosynthesis via de novo pathway; 5-amino-1-(5-phospho-D-ribosyl)imidazole-4-carboxamide from 5-amino-1-(5-phospho-D-ribosyl)imidazole-4-carboxylate: step 1/2. The polypeptide is Phosphoribosylaminoimidazole-succinocarboxamide synthase (Rhizorhabdus wittichii (strain DSM 6014 / CCUG 31198 / JCM 15750 / NBRC 105917 / EY 4224 / RW1) (Sphingomonas wittichii)).